The chain runs to 302 residues: Riboflavin transporter (302 aa).

8 consecutive transmembrane segments (helical) span residues 16-36 (AVVG…LNVV), 44-64 (LAFP…LFSL), 87-107 (VVLA…VPIW), 109-129 (AIAL…LFLG), 158-178 (IGWA…SSLI), 191-213 (ITVW…AGFA), 227-247 (GLLT…ADAA), and 264-284 (GWLF…ALIL). EamA domains follow at residues 30-151 (FSLL…MIIL) and 170-291 (LLWG…LFIM).

This sequence belongs to the drug/metabolite transporter (DMT) superfamily. 10 TMS drug/metabolite exporter (DME) (TC 2.A.7.3) family.

It localises to the cell membrane. Transports riboflavin into the cell. Can also transport FMN and FAD. Required for normal nodule development during colonization of pea plant roots. The chain is Riboflavin transporter from Rhizobium johnstonii (strain DSM 114642 / LMG 32736 / 3841) (Rhizobium leguminosarum bv. viciae).